The sequence spans 205 residues: Isochorismatase domain-containing protein 2 (205 aa).

Belongs to the isochorismatase family. As to quaternary structure, interacts with CDKN2A.

It is found in the cytoplasm. Its subcellular location is the nucleus. In Macaca fascicularis (Crab-eating macaque), this protein is Isochorismatase domain-containing protein 2 (ISOC2).